Here is a 613-residue protein sequence, read N- to C-terminus: Protein ECM3 (613 aa).

4 consecutive transmembrane segments (helical) span residues 10-30 (IWAS…GFGL), 74-94 (GIIC…AFIV), 106-126 (GGIL…AYLQ), and 143-163 (VANV…LGGF). Residues 177 to 256 (DEENTLTNDD…PAIDDRSSNS (80 aa)) form a disordered region. Polar residues-rich tracts occupy residues 187-206 (SAQQ…SNQD) and 213-226 (ESTV…SYIS). Phosphoserine occurs at positions 291 and 338. Residues 345–366 (RRRKSSISSQGAPSVLQADGTI) form a disordered region. Transmembrane regions (helical) follow at residues 432–452 (MAVI…LFVT), 471–491 (FIMD…LILL), 546–566 (MLLF…LIYF), and 587–607 (FLML…SYFI).

The protein localises to the endoplasmic reticulum membrane. Functionally, may be involved in cell wall organization and biogenesis. This chain is Protein ECM3 (ECM3), found in Saccharomyces cerevisiae (strain ATCC 204508 / S288c) (Baker's yeast).